The sequence spans 660 residues: UvrABC system protein B (660 aa).

The Helicase ATP-binding domain maps to 26-413 (AGINEGKKHQ…TPEMVEQIIR (388 aa)). 39 to 46 (GATGTGKT) serves as a coordination point for ATP. The short motif at 92–115 (YYDYYQPEAYVPQSDTYIEKDASI) is the Beta-hairpin element. Residues 430-592 (QIDDLIGEIN…ITPKTIEKRI (163 aa)) form the Helicase C-terminal domain. Positions 624 to 659 (EAVIERMEAEMKEAAKTLNFERAAELRDLILELKAE) constitute a UVR domain.

The protein belongs to the UvrB family. As to quaternary structure, forms a heterotetramer with UvrA during the search for lesions. Interacts with UvrC in an incision complex.

It is found in the cytoplasm. In terms of biological role, the UvrABC repair system catalyzes the recognition and processing of DNA lesions. A damage recognition complex composed of 2 UvrA and 2 UvrB subunits scans DNA for abnormalities. Upon binding of the UvrA(2)B(2) complex to a putative damaged site, the DNA wraps around one UvrB monomer. DNA wrap is dependent on ATP binding by UvrB and probably causes local melting of the DNA helix, facilitating insertion of UvrB beta-hairpin between the DNA strands. Then UvrB probes one DNA strand for the presence of a lesion. If a lesion is found the UvrA subunits dissociate and the UvrB-DNA preincision complex is formed. This complex is subsequently bound by UvrC and the second UvrB is released. If no lesion is found, the DNA wraps around the other UvrB subunit that will check the other stand for damage. The chain is UvrABC system protein B from Halalkalibacterium halodurans (strain ATCC BAA-125 / DSM 18197 / FERM 7344 / JCM 9153 / C-125) (Bacillus halodurans).